A 697-amino-acid chain; its full sequence is PHD finger protein At1g33420 (697 aa).

The segment at 603-653 (KVDCKCGTKDDDGERMLACDGCGVWHHTRCIGINNADALPSKFLCFRCIEL) adopts a PHD-type zinc-finger fold.

Its subcellular location is the nucleus. In Arabidopsis thaliana (Mouse-ear cress), this protein is PHD finger protein At1g33420.